Here is a 50-residue protein sequence, read N- to C-terminus: Mast cell degranulating peptide (50 aa).

The first 27 residues, 1–27 (MISMLRCTFFFLSVILITSYFVTPTMS), serve as a signal peptide directing secretion. At K29 the chain carries N6-formyllysine; partial. 2 disulfides stabilise this stretch: C30/C42 and C32/C46. K44 and K48 each carry N6-formyllysine; partial. The residue at position 49 (N49) is an Asparagine amide.

Expressed by the venom gland.

The protein localises to the secreted. In terms of biological role, potent anti-inflammatory agent. At low concentrations, mediates the degranulation of mast cells thus evoking an inflammatory response. Also acts as a neurotoxin capable of blocking a class of voltage-gated potassium channels. The protein is Mast cell degranulating peptide of Apis mellifera (Honeybee).